Reading from the N-terminus, the 299-residue chain is Transcription elongation factor A protein 2 (299 aa).

One can recognise a TFIIS N-terminal domain in the interval 6 to 83 (EEIARIARRL…KSWKKLLDAS (78 aa)). Residue K58 forms a Glycyl lysine isopeptide (Lys-Gly) (interchain with G-Cter in ubiquitin) linkage. Residues S60 and S100 each carry the phosphoserine modification. Residues 86 to 128 (KARERGRGMPLPTSSRDASEAPDPSRKRPELPRAPSTPRITTF) are disordered. The segment covering 102 to 116 (DASEAPDPSRKRPEL) has biased composition (basic and acidic residues). Residues 138–254 (VRNKCREMLT…EHQMARTGGT (117 aa)) enclose the TFIIS central domain. A TFIIS-type zinc finger spans residues 257–297 (DLFTCGKCRKKNCTYTQVQTRSSDEPMTTFVVCNECGNRWK). Residues C261, C264, C289, and C292 each coordinate Zn(2+).

The protein belongs to the TFS-II family. As to quaternary structure, interacts with the basal transcription factor GTF2B. Interacts with REXO1. Testis and ovary specific.

It localises to the nucleus. Its function is as follows. Necessary for efficient RNA polymerase II transcription elongation past template-encoded arresting sites. The arresting sites in DNA have the property of trapping a certain fraction of elongating RNA polymerases that pass through, resulting in locked ternary complexes. Cleavage of the nascent transcript by S-II allows the resumption of elongation from the new 3'-terminus. The polypeptide is Transcription elongation factor A protein 2 (TCEA2) (Homo sapiens (Human)).